The primary structure comprises 213 residues: Large ribosomal subunit protein uL23 (213 aa).

A large ribosomal subunit protein uL23 region spans residues 1–117 (MNHNEIIKYP…KSTSELKLEE (117 aa)). The unknown stretch occupies residues 118-213 (KIAAKIAAKE…TTKKTTTKKV (96 aa)).

Belongs to the universal ribosomal protein uL23 family. Part of the 50S ribosomal subunit. Contacts protein L29, and trigger factor when it is bound to the ribosome.

One of the early assembly proteins it binds 23S rRNA. One of the proteins that surrounds the polypeptide exit tunnel on the outside of the ribosome. Forms the main docking site for trigger factor binding to the ribosome. This chain is Large ribosomal subunit protein uL23, found in Mycoplasma mobile (strain ATCC 43663 / 163K / NCTC 11711) (Mesomycoplasma mobile).